The primary structure comprises 680 residues: Harmonin-binding protein USHBP1 (680 aa).

The span at 1-15 (MSARATRPRSRRGRH) shows a compositional bias: basic residues. Disordered stretches follow at residues 1-51 (MSAR…YLGP) and 134-161 (KSVE…PGQQ). Residues 179 to 218 (NREDELACTQASLQDAQAEKETLQRQVQELEDSLMQMEAS) adopt a coiled-coil conformation. 2 disordered regions span residues 220–247 (PTPI…VPQD) and 384–405 (TMEV…PTPE). Coiled-coil stretches lie at residues 363–386 (TKGD…ATME) and 467–506 (QIQQ…LRAQ). A disordered region spans residues 524–549 (FAGDGSSGGSSEDPSSEEEAGEDRQQ). The stretch at 573 to 662 (QELSASLARA…QAEELAVLTA (90 aa)) forms a coiled coil.

It belongs to the MCC family. Interacts via its C-terminus with the first PDZ domain of USH1C.

In Mus musculus (Mouse), this protein is Harmonin-binding protein USHBP1.